The chain runs to 155 residues: uncharacterized protein (155 aa).

2 helical membrane-spanning segments follow: residues Ile33–Leu53 and Ile83–Val103.

This sequence to E.coli YdgK.

It localises to the cell membrane. This is an uncharacterized protein from Synechocystis sp. (strain ATCC 27184 / PCC 6803 / Kazusa).